The sequence spans 512 residues: Cytochrome P450 1A1 (512 aa).

Residues 29-40 (SRPRVPKGLKNP) form a mitochondrial targeting signal region. Residue S67 is glycosylated (O-linked (GlcNAc) serine). F224 contributes to the substrate binding site. Residue C457 coordinates heme.

Belongs to the cytochrome P450 family. As to quaternary structure, interacts with cytosolic chaperones HSP70 and HSP90; this interaction is required for initial targeting to mitochondria. Interacts (via mitochondrial targeting signal) with TOMM40 (via N-terminus); this interaction is required for translocation across the mitochondrial outer membrane. Requires heme as cofactor.

It is found in the endoplasmic reticulum membrane. It localises to the mitochondrion inner membrane. Its subcellular location is the microsome membrane. The protein resides in the cytoplasm. It catalyses the reaction an organic molecule + reduced [NADPH--hemoprotein reductase] + O2 = an alcohol + oxidized [NADPH--hemoprotein reductase] + H2O + H(+). The catalysed reaction is estrone + reduced [NADPH--hemoprotein reductase] + O2 = 2-hydroxyestrone + oxidized [NADPH--hemoprotein reductase] + H2O + H(+). It carries out the reaction estrone + reduced [NADPH--hemoprotein reductase] + O2 = 4-hydroxyestrone + oxidized [NADPH--hemoprotein reductase] + H2O + H(+). The enzyme catalyses estrone + reduced [NADPH--hemoprotein reductase] + O2 = 6alpha-hydroxyestrone + oxidized [NADPH--hemoprotein reductase] + H2O + H(+). It catalyses the reaction estrone + reduced [NADPH--hemoprotein reductase] + O2 = 15alpha-hydroxyestrone + oxidized [NADPH--hemoprotein reductase] + H2O + H(+). The catalysed reaction is estrone + reduced [NADPH--hemoprotein reductase] + O2 = 16alpha-hydroxyestrone + oxidized [NADPH--hemoprotein reductase] + H2O + H(+). It carries out the reaction 17beta-estradiol + reduced [NADPH--hemoprotein reductase] + O2 = 2-hydroxy-17beta-estradiol + oxidized [NADPH--hemoprotein reductase] + H2O + H(+). The enzyme catalyses 17beta-estradiol + reduced [NADPH--hemoprotein reductase] + O2 = 4-hydroxy-17beta-estradiol + oxidized [NADPH--hemoprotein reductase] + H2O + H(+). It catalyses the reaction 17beta-estradiol + reduced [NADPH--hemoprotein reductase] + O2 = 6alpha-hydroxy-17beta-estradiol + oxidized [NADPH--hemoprotein reductase] + H2O + H(+). The catalysed reaction is 17beta-estradiol + reduced [NADPH--hemoprotein reductase] + O2 = 7alpha-hydroxy-17beta-estradiol + oxidized [NADPH--hemoprotein reductase] + H2O + H(+). It carries out the reaction 17beta-estradiol + reduced [NADPH--hemoprotein reductase] + O2 = 15alpha-hydroxy-17beta-estradiol + oxidized [NADPH--hemoprotein reductase] + H2O + H(+). The enzyme catalyses (5Z,8Z,11Z)-eicosatrienoate + reduced [NADPH--hemoprotein reductase] + O2 = 19-hydroxy-(5Z,8Z,11Z)-eicosatrienoate + oxidized [NADPH--hemoprotein reductase] + H2O + H(+). It catalyses the reaction (5Z,8Z,11Z,14Z)-eicosatetraenoate + reduced [NADPH--hemoprotein reductase] + O2 = 16-hydroxy-(5Z,8Z,11Z,14Z)-eicosatetraenoate + oxidized [NADPH--hemoprotein reductase] + H2O + H(+). The catalysed reaction is (5Z,8Z,11Z,14Z)-eicosatetraenoate + reduced [NADPH--hemoprotein reductase] + O2 = 17-hydroxy-(5Z,8Z,11Z,14Z)-eicosatetraenoate + oxidized [NADPH--hemoprotein reductase] + H2O + H(+). It carries out the reaction (5Z,8Z,11Z,14Z)-eicosatetraenoate + reduced [NADPH--hemoprotein reductase] + O2 = 18-hydroxy-(5Z,8Z,11Z,14Z)-eicosatetraenoate + oxidized [NADPH--hemoprotein reductase] + H2O + H(+). The enzyme catalyses (5Z,8Z,11Z,14Z)-eicosatetraenoate + reduced [NADPH--hemoprotein reductase] + O2 = 19-hydroxy-(5Z,8Z,11Z,14Z)-eicosatetraenoate + oxidized [NADPH--hemoprotein reductase] + H2O + H(+). It catalyses the reaction (5Z,8Z,11Z,14Z,17Z)-eicosapentaenoate + reduced [NADPH--hemoprotein reductase] + O2 = 19-hydroxy-(5Z,8Z,11Z,14Z,17Z)-eicosapentaenoate + oxidized [NADPH--hemoprotein reductase] + H2O + H(+). The catalysed reaction is (5Z,8Z,11Z,14Z)-eicosatetraenoate + reduced [NADPH--hemoprotein reductase] + O2 = (8R,9S)-epoxy-(5Z,11Z,14Z)-eicosatrienoate + oxidized [NADPH--hemoprotein reductase] + H2O + H(+). It carries out the reaction (5Z,8Z,11Z,14Z)-eicosatetraenoate + reduced [NADPH--hemoprotein reductase] + O2 = (11R,12S)-epoxy-(5Z,8Z,14Z)-eicosatrienoate + oxidized [NADPH--hemoprotein reductase] + H2O + H(+). The enzyme catalyses (5Z,8Z,11Z,14Z)-eicosatetraenoate + reduced [NADPH--hemoprotein reductase] + O2 = (14S,15R)-epoxy-(5Z,8Z,11Z)-eicosatrienoate + oxidized [NADPH--hemoprotein reductase] + H2O + H(+). It catalyses the reaction (5Z,8Z,11Z,14Z)-eicosatetraenoate + reduced [NADPH--hemoprotein reductase] + O2 = (14R,15S)-epoxy-(5Z,8Z,11Z)-eicosatrienoate + oxidized [NADPH--hemoprotein reductase] + H2O + H(+). The catalysed reaction is (5Z,8Z,11Z,14Z,17Z)-eicosapentaenoate + reduced [NADPH--hemoprotein reductase] + O2 = (17R,18S)-epoxy-(5Z,8Z,11Z,14Z)-eicosatetraenoate + oxidized [NADPH--hemoprotein reductase] + H2O + H(+). It carries out the reaction (4Z,7Z,10Z,13Z,16Z,19Z)-docosahexaenoate + reduced [NADPH--hemoprotein reductase] + O2 = (19S,20R)-epoxy-(4Z,7Z,10Z,13Z,16Z)-docosapentaenoate + oxidized [NADPH--hemoprotein reductase] + H2O + H(+). The enzyme catalyses (4Z,7Z,10Z,13Z,16Z,19Z)-docosahexaenoate + reduced [NADPH--hemoprotein reductase] + O2 = (19R,20S)-epoxy-(4Z,7Z,10Z,13Z,16Z)-docosapentaenoate + oxidized [NADPH--hemoprotein reductase] + H2O + H(+). It catalyses the reaction all-trans-retinol + reduced [NADPH--hemoprotein reductase] + O2 = all-trans-retinal + oxidized [NADPH--hemoprotein reductase] + 2 H2O + H(+). The catalysed reaction is all-trans-retinal + reduced [NADPH--hemoprotein reductase] + O2 = all-trans-retinoate + oxidized [NADPH--hemoprotein reductase] + H2O + 2 H(+). It carries out the reaction (13S)-hydroperoxy-(9Z,11E)-octadecadienoate = 13-oxo-(9Z,11E)-octadecadienoate + H2O. The enzyme catalyses (12S)-hydroperoxy-(5Z,8Z,10E,14Z)-eicosatetraenoate = 12-oxo-(5Z,8Z,10E,14Z)-eicosatetraenoate + H2O. It catalyses the reaction (15S)-hydroperoxy-(5Z,8Z,11Z,13E)-eicosatetraenoate = 15-oxo-(5Z,8Z,11Z,13E)-eicosatetraenoate + H2O. The catalysed reaction is (5S)-hydroperoxy-(6E,8Z,11Z,14Z)-eicosatetraenoate = 5-oxo-(6E,8Z,11Z,14Z)-eicosatetraenoate + H2O. It functions in the pathway steroid hormone biosynthesis. The protein operates within lipid metabolism; fatty acid metabolism. Its pathway is cofactor metabolism; retinol metabolism. Functionally, a cytochrome P450 monooxygenase involved in the metabolism of various endogenous substrates, including fatty acids, steroid hormones and vitamins. Mechanistically, uses molecular oxygen inserting one oxygen atom into a substrate, and reducing the second into a water molecule, with two electrons provided by NADPH via cytochrome P450 reductase (CPR; NADPH-ferrihemoprotein reductase). Catalyzes the hydroxylation of carbon-hydrogen bonds. Exhibits high catalytic activity for the formation of hydroxyestrogens from estrone (E1) and 17beta-estradiol (E2), namely 2-hydroxy E1 and E2, as well as D-ring hydroxylated E1 and E2 at the C15alpha and C16alpha positions. Displays different regioselectivities for polyunsaturated fatty acids (PUFA) hydroxylation. Catalyzes the epoxidation of double bonds of certain PUFA. Converts arachidonic acid toward epoxyeicosatrienoic acid (EET) regioisomers, 8,9-, 11,12-, and 14,15-EET, that function as lipid mediators in the vascular system. Displays an absolute stereoselectivity in the epoxidation of eicosapentaenoic acid (EPA) producing the 17(R),18(S) enantiomer. May play an important role in all-trans retinoic acid biosynthesis in extrahepatic tissues. Catalyzes two successive oxidative transformation of all-trans retinol to all-trans retinal and then to the active form all-trans retinoic acid. May also participate in eicosanoids metabolism by converting hydroperoxide species into oxo metabolites (lipoxygenase-like reaction, NADPH-independent). This is Cytochrome P450 1A1 (CYP1A1) from Macaca fascicularis (Crab-eating macaque).